The sequence spans 953 residues: Pyruvate, phosphate dikinase, chloroplastic (953 aa).

A chloroplast-targeting transit peptide spans methionine 1–threonine 77. The tract at residues proline 55–proline 74 is disordered. Threonine 533 is modified (phosphothreonine; by PDRP1). The Tele-phosphohistidine intermediate role is filled by histidine 535. Substrate-binding residues include arginine 641, arginine 698, glutamate 827, glycine 848, threonine 849, asparagine 850, and aspartate 851. Glutamate 827 contacts Mg(2+). Aspartate 851 serves as a coordination point for Mg(2+). Residue cysteine 913 is the Proton donor of the active site.

This sequence belongs to the PEP-utilizing enzyme family. As to quaternary structure, homotetramer. It depends on Mg(2+) as a cofactor. In terms of processing, phosphorylation of Thr-533 in the dark inactivates the enzyme. Dephosphorylation upon light stimulation reactivates the enzyme. In terms of tissue distribution, isoform 1 mainly localized in mesophyll cells and only a low level is found in bundle sheath cells. Isoform 2 is expressed in roots and stems.

It localises to the plastid. The protein resides in the chloroplast. The protein localises to the cytoplasm. It carries out the reaction pyruvate + phosphate + ATP = phosphoenolpyruvate + AMP + diphosphate + H(+). It participates in photosynthesis; C4 acid pathway. Activated by light-induced dephosphorylation. Inhibited by dark-induced phosphorylation. Both reactions are catalyzed by PDRP1. Formation of phosphoenolpyruvate, which is the primary acceptor of CO(2) in C4 and some Crassulacean acid metabolism plants. The polypeptide is Pyruvate, phosphate dikinase, chloroplastic (PPDK) (Flaveria trinervia (Clustered yellowtops)).